The sequence spans 320 residues: Aspartate carbamoyltransferase catalytic subunit (320 aa).

Arg68 and Thr69 together coordinate carbamoyl phosphate. Lys96 contributes to the L-aspartate binding site. Residues Arg118, His148, and Gln151 each contribute to the carbamoyl phosphate site. The L-aspartate site is built by Arg181 and Arg236. Carbamoyl phosphate-binding residues include Gly277 and Pro278.

This sequence belongs to the aspartate/ornithine carbamoyltransferase superfamily. ATCase family. Heterododecamer (2C3:3R2) of six catalytic PyrB chains organized as two trimers (C3), and six regulatory PyrI chains organized as three dimers (R2).

The enzyme catalyses carbamoyl phosphate + L-aspartate = N-carbamoyl-L-aspartate + phosphate + H(+). It functions in the pathway pyrimidine metabolism; UMP biosynthesis via de novo pathway; (S)-dihydroorotate from bicarbonate: step 2/3. Functionally, catalyzes the condensation of carbamoyl phosphate and aspartate to form carbamoyl aspartate and inorganic phosphate, the committed step in the de novo pyrimidine nucleotide biosynthesis pathway. The protein is Aspartate carbamoyltransferase catalytic subunit of Leptothrix cholodnii (strain ATCC 51168 / LMG 8142 / SP-6) (Leptothrix discophora (strain SP-6)).